A 520-amino-acid chain; its full sequence is Beta-galactoside-specific lectin 4 (520 aa).

An N-linked (GlcNAc...) asparagine glycan is attached at Asn107. Residue Glu159 is part of the active site. Cys240 and Cys266 are disulfide-bonded. The propeptide at 241–265 (GERPSSSDVRYWPLVIRPVIADDVT) is connecting peptide. In terms of domain architecture, Ricin B-type lectin 1 spans 269-396 (SEPTVRIVGR…YTLGQGWLAG (128 aa)). Position 284–286 (284–286 (DVR)) interacts with D-galactose. The N-linked (GlcNAc...) asparagine glycan is linked to Asn322. Cys325 and Cys342 are joined by a disulfide. N-linked (GlcNAc...) asparagine glycans are attached at residues Asn357 and Asn397. In terms of domain architecture, Ricin B-type lectin 2 spans 400–520 (APREVTIYGF…KPNQMWLPVP (121 aa)). Intrachain disulfides connect Cys413–Cys426 and Cys451–Cys467. A D-galactose-binding site is contributed by 494 to 496 (DVA).

It belongs to the ribosome-inactivating protein family. Type 2 RIP subfamily. As to quaternary structure, disulfide-linked dimer of A and B chains.

It catalyses the reaction Endohydrolysis of the N-glycosidic bond at one specific adenosine on the 28S rRNA.. Functionally, the A chain is responsible for inhibiting protein synthesis through the catalytic inactivation of 60S ribosomal subunits by removing adenine from position 4,324 of 28S rRNA. The B chain binds to cell receptors and probably facilitates the entry into the cell of the A chain; B chains are also responsible for cell agglutination (lectin activity). Inhibits growth of the human tumor cell line Molt4. The sequence is that of Beta-galactoside-specific lectin 4 from Viscum album (European mistletoe).